The sequence spans 294 residues: Pyridoxal 5'-phosphate synthase subunit PdxS (294 aa).

Aspartate 24 contacts D-ribose 5-phosphate. Lysine 81 acts as the Schiff-base intermediate with D-ribose 5-phosphate in catalysis. Glycine 153 is a D-ribose 5-phosphate binding site. Arginine 165 lines the D-glyceraldehyde 3-phosphate pocket. D-ribose 5-phosphate-binding positions include glycine 214 and 235-236; that span reads GS.

It belongs to the PdxS/SNZ family. As to quaternary structure, in the presence of PdxT, forms a dodecamer of heterodimers.

The catalysed reaction is aldehydo-D-ribose 5-phosphate + D-glyceraldehyde 3-phosphate + L-glutamine = pyridoxal 5'-phosphate + L-glutamate + phosphate + 3 H2O + H(+). It functions in the pathway cofactor biosynthesis; pyridoxal 5'-phosphate biosynthesis. In terms of biological role, catalyzes the formation of pyridoxal 5'-phosphate from ribose 5-phosphate (RBP), glyceraldehyde 3-phosphate (G3P) and ammonia. The ammonia is provided by the PdxT subunit. Can also use ribulose 5-phosphate and dihydroxyacetone phosphate as substrates, resulting from enzyme-catalyzed isomerization of RBP and G3P, respectively. This is Pyridoxal 5'-phosphate synthase subunit PdxS from Geobacillus thermodenitrificans (strain NG80-2).